A 465-amino-acid chain; its full sequence is Ribulose bisphosphate carboxylase large chain (465 aa).

N6,N6,N6-trimethyllysine is present on K4. Positions 113 and 163 each coordinate substrate. Catalysis depends on K165, which acts as the Proton acceptor. K167 provides a ligand contact to substrate. Residues K191, D193, and E194 each contribute to the Mg(2+) site. Position 191 is an N6-carboxylysine (K191). The active-site Proton acceptor is the H284. Substrate-binding residues include R285, H317, and S369.

It belongs to the RuBisCO large chain family. Type I subfamily. In terms of assembly, heterohexadecamer of 8 large chains and 8 small chains; disulfide-linked. The disulfide link is formed within the large subunit homodimers. It depends on Mg(2+) as a cofactor. The disulfide bond which can form in the large chain dimeric partners within the hexadecamer appears to be associated with oxidative stress and protein turnover.

Its subcellular location is the plastid. It is found in the chloroplast. The catalysed reaction is 2 (2R)-3-phosphoglycerate + 2 H(+) = D-ribulose 1,5-bisphosphate + CO2 + H2O. The enzyme catalyses D-ribulose 1,5-bisphosphate + O2 = 2-phosphoglycolate + (2R)-3-phosphoglycerate + 2 H(+). Functionally, ruBisCO catalyzes two reactions: the carboxylation of D-ribulose 1,5-bisphosphate, the primary event in carbon dioxide fixation, as well as the oxidative fragmentation of the pentose substrate in the photorespiration process. Both reactions occur simultaneously and in competition at the same active site. This Byrsonima crassifolia (Cajuil cimarron) protein is Ribulose bisphosphate carboxylase large chain.